The primary structure comprises 538 residues: Carboxypeptidase 2 (538 aa).

Positions 1–21 (MVAYRFLTLISLGLGSHCASA) are cleaved as a signal peptide. An N-linked (GlcNAc...) asparagine glycan is attached at Asn46. The interval 53-76 (PAFTSPGTVPRGFSDGTSGPTRDE) is disordered. The Peptidase M14 domain maps to 71 to 351 (GPTRDETMEG…VMVKSILQTA (281 aa)). The Zn(2+) site is built by His136, Glu139, and His224. The Proton donor/acceptor role is filled by Glu322. N-linked (GlcNAc...) asparagine glycans are attached at residues Asn393 and Asn459.

This sequence belongs to the peptidase M14 family. Requires Zn(2+) as cofactor.

Its subcellular location is the secreted. Extracellular metalloprotease that contributes to pathogenicity. The chain is Carboxypeptidase 2 (MCPB) from Trichophyton tonsurans (Scalp ringworm fungus).